Here is a 137-residue protein sequence, read N- to C-terminus: FAD synthase (137 aa).

Residues 5 to 6 (TF), 10 to 13 (HPGH), and D88 contribute to the ATP site.

It belongs to the archaeal FAD synthase family. In terms of assembly, homodimer. It depends on a divalent metal cation as a cofactor.

The enzyme catalyses FMN + ATP + H(+) = FAD + diphosphate. It functions in the pathway cofactor biosynthesis; FAD biosynthesis; FAD from FMN: step 1/1. Functionally, catalyzes the transfer of the AMP portion of ATP to flavin mononucleotide (FMN) to produce flavin adenine dinucleotide (FAD) coenzyme. The polypeptide is FAD synthase (Archaeoglobus fulgidus (strain ATCC 49558 / DSM 4304 / JCM 9628 / NBRC 100126 / VC-16)).